Here is an 817-residue protein sequence, read N- to C-terminus: Neurabin-2 (817 aa).

2 disordered regions span residues 1–52 and 64–163; these read MMKT…KYGS and MGTT…GGDK. 2 actin-binding regions span residues 1 to 154 and 164 to 282; these read MMKT…FERS and EAVA…QHRV. Ser15 carries the phosphoserine; by MAPK1 modification. Ser17 carries the phosphoserine; by CDK5 modification. The residue at position 94 (Ser94) is a Phosphoserine; by PKA. A phosphoserine mark is found at Ser100 and Ser116. Residues 100–371 are interaction with D(2) dopamine receptor; that stretch reads SLNENVDHSA…LERGVDNGRA (272 aa). A compositionally biased stretch (pro residues) spans 131–141; sequence SAQPAPPPHPP. Residues 169 to 255 form an interaction with ADRA2A, ADRA2B and ADRA2C region; that stretch reads RLLRQERAGL…KRSRVFQPPP (87 aa). Ser192 bears the Phosphoserine mark. Thr193 bears the Phosphothreonine mark. Position 205 is a phosphoserine; by MAPK1 (Ser205). Thr207 is subject to Phosphothreonine. The tract at residues 216–451 is disordered; the sequence is EKADSRTGLH…DPAPSRKIHF (236 aa). A compositionally biased stretch (basic and acidic residues) spans 290–301; it reads KPREVRKIKPVE. 2 stretches are compositionally biased toward low complexity: residues 332–341 and 399–409; these read STPATTASPA and SGLGEDSGGSA. Over residues 410-425 the composition is skewed to acidic residues; the sequence is LEEDDEEDEEDGEPPY. The interaction with protein phosphatase 1 stretch occupies residues 417 to 494; sequence DEEDGEPPYE…LEKRVERLEL (78 aa). Position 438 is a phosphoserine (Ser438). A PP1-binding motif motif is present at residues 447-451; the sequence is RKIHF. The tract at residues 480–525 is interaction with RGS2; that stretch reads SAEYELEKRVERLELFPVELEKDSEGLGISIIGMGAGADMGLEKLG. Positions 496–584 constitute a PDZ domain; the sequence is PVELEKDSEG…RVRFMIGRER (89 aa). Residues 595 to 616 are a coiled coil; sequence IQQTLEQERWQREMMEQRYAQY. An interaction with TGN38 region spans residues 595–816; that stretch reads IQQTLEQERW…NLQTLRNSNS (222 aa). Residue Ser658 is modified to Phosphoserine. Positions 665–816 form a coiled coil; it reads EKLVHKFKEL…NLQTLRNSNS (152 aa).

As to quaternary structure, possibly exists as a homodimer, homotrimer or a homotetramer. Interacts with F-actin, PPP1CA, neurabin-1, TGN38 and D(2) dopamine receptor. Interacts with RGS1, RGS2, RGS4, RGS19 and ADRA1B, ADRA2A, ADRA2B, ADRA2C, CDKN2A, PPP1R2, RASGFR1 and TIAM1. Interacts (via C-terminus) with SPATA13 (via C-terminal tail). Interacts with DCLK2. Interacts with ADRA2B. Stimulation of D1 (but not D2) dopamine receptors induces Ser-94 phosphorylation. Dephosphorylation of Ser-94 is mediated mainly by PP1 and to a lesser extent by PP2A. Phosphorylation of spinophilin disrupts its association with F-actin, but does not affect its binding to PP1.

Its subcellular location is the cytoplasm. It localises to the cytoskeleton. It is found in the nucleus. The protein localises to the postsynaptic density. The protein resides in the cell junction. Its subcellular location is the adherens junction. It localises to the cell projection. It is found in the dendritic spine. The protein localises to the cell membrane. The protein resides in the lamellipodium. Its subcellular location is the filopodium. It localises to the ruffle membrane. Its function is as follows. Seems to act as a scaffold protein in multiple signaling pathways. Modulates excitatory synaptic transmission and dendritic spine morphology. Binds to actin filaments (F-actin) and shows cross-linking activity. Binds along the sides of the F-actin. May play an important role in linking the actin cytoskeleton to the plasma membrane at the synaptic junction. Believed to target protein phosphatase 1/PP1 to dendritic spines, which are rich in F-actin, and regulates its specificity toward ion channels and other substrates, such as AMPA-type and NMDA-type glutamate receptors. Plays a role in regulation of G-protein coupled receptor signaling, including dopamine D2 receptors and alpha-adrenergic receptors. May establish a signaling complex for dopaminergic neurotransmission through D2 receptors by linking receptors downstream signaling molecules and the actin cytoskeleton. Binds to ADRA1B and RGS2 and mediates regulation of ADRA1B signaling. May confer to Rac signaling specificity by binding to both, RacGEFs and Rac effector proteins. Probably regulates p70 S6 kinase activity by forming a complex with TIAM1. Required for hepatocyte growth factor (HGF)-induced cell migration. This is Neurabin-2 (Ppp1r9b) from Mus musculus (Mouse).